The following is a 208-amino-acid chain: Probable GTP-binding protein EngB (208 aa).

An EngB-type G domain is found at 22–195 (GLPEIALAGR…WGALEDIFVE (174 aa)). GTP-binding positions include 30-37 (GRSNVGKS), 57-61 (GKTRT), 75-78 (DLPG), 142-145 (TKSD), and 174-176 (ISS). Mg(2+) contacts are provided by Ser37 and Thr59.

The protein belongs to the TRAFAC class TrmE-Era-EngA-EngB-Septin-like GTPase superfamily. EngB GTPase family. The cofactor is Mg(2+).

Functionally, necessary for normal cell division and for the maintenance of normal septation. The chain is Probable GTP-binding protein EngB from Alkaliphilus metalliredigens (strain QYMF).